A 121-amino-acid chain; its full sequence is Chromosome transmission fidelity protein 8 homolog (121 aa).

Belongs to the CTF8 family. Component of the CTF18-RFC complex, which consists of CTF18, CTF8, DSCC1, RFC2, RFC3, RFC4 and RFC5. The CTF18-RFC complex does not interact with the Rad9/Rad1/Hus1 complex. The CTF18-RFC complex interacts with POLH. CTF18/CTF8/DSCC1 associate with PCNA. CTF8 exists as a dimer with DSCC1.

The protein resides in the nucleus. Functionally, chromosome cohesion factor involved in sister chromatid cohesion and fidelity of chromosome transmission. Component of one of the cell nuclear antigen loader complexes, CTF18-replication factor C (CTF18-RFC), which consists of CTF18, CTF8, DSCC1, RFC2, RFC3, RFC4 and RFC5. The CTF18-RFC complex binds to single-stranded and primed DNAs and has weak ATPase activity that is stimulated the presence of primed DNA, replication protein A (RPA) and proliferating cell nuclear antigen (PCNA). The CTF18-RFC complex catalyzes the ATP-dependent loading of PCNA onto primed and gapped DNA. It also interacts with and stimulates POLH, which is suggestive of a protein network that coordinates DNA repair, recombination and chromosome cohesion reactions with replication fork progression. The polypeptide is Chromosome transmission fidelity protein 8 homolog (Rattus norvegicus (Rat)).